We begin with the raw amino-acid sequence, 446 residues long: Palmitoyltransferase PFA4 (446 aa).

Residues 1–8 (MAVQLKWP) lie on the Cytoplasmic side of the membrane. A helical transmembrane segment spans residues 9-29 (ILGVIIPCIIIFSLSYGSHYF). Topologically, residues 30 to 40 (ILRHHLTMKQQ) are lumenal. Residues 41–61 (LIYEFYVTMIWISYLLAIYTN) form a helical membrane-spanning segment. Over 62-161 (PGRVPKNYKP…GNNNLPHFMR (100 aa)) the chain is Cytoplasmic. One can recognise a DHHC domain in the interval 114–164 (RYCKKCNNYKPPRSHHCKICQQCVLQMDHHCPWTLNCVGNNNLPHFMRFLG). Catalysis depends on cysteine 144, which acts as the S-palmitoyl cysteine intermediate. The helical transmembrane segment at 162 to 182 (FLGWIIWGTGYLMIQLIKLII) threads the bilayer. The Lumenal portion of the chain corresponds to 183–201 (NYYENSNMPHYLFNKTELV). The chain crosses the membrane as a helical span at residues 202-222 (AIIAITPLNFFVFASILVLFI). Over 223 to 446 (RCLINICKGM…TDFGVDEDSD (224 aa)) the chain is Cytoplasmic.

This sequence belongs to the DHHC palmitoyltransferase family. PFA4 subfamily.

The protein resides in the endoplasmic reticulum membrane. The enzyme catalyses L-cysteinyl-[protein] + hexadecanoyl-CoA = S-hexadecanoyl-L-cysteinyl-[protein] + CoA. In terms of biological role, mediates the reversible addition of palmitate to target proteins, thereby regulating their membrane association and biological function. This is Palmitoyltransferase PFA4 from Candida albicans (strain SC5314 / ATCC MYA-2876) (Yeast).